The sequence spans 474 residues: L-arabinose isomerase (474 aa).

Mn(2+) contacts are provided by glutamate 306, glutamate 331, histidine 348, and histidine 447.

It belongs to the arabinose isomerase family. Mn(2+) is required as a cofactor.

It carries out the reaction beta-L-arabinopyranose = L-ribulose. The protein operates within carbohydrate degradation; L-arabinose degradation via L-ribulose; D-xylulose 5-phosphate from L-arabinose (bacterial route): step 1/3. Functionally, catalyzes the conversion of L-arabinose to L-ribulose. This is L-arabinose isomerase from Lactiplantibacillus plantarum (strain ATCC BAA-793 / NCIMB 8826 / WCFS1) (Lactobacillus plantarum).